A 234-amino-acid polypeptide reads, in one-letter code: Thrombin-like enzyme ancrod (234 aa).

In terms of domain architecture, Peptidase S1 spans 1 to 227 (VIGGDECNIN…YRDWVNNVIA (227 aa)). Intrachain disulfides connect cysteine 7/cysteine 141, cysteine 28/cysteine 44, cysteine 78/cysteine 232, cysteine 120/cysteine 188, cysteine 152/cysteine 167, and cysteine 178/cysteine 203. Asparagine 23 carries an N-linked (GlcNAc...) asparagine glycan. The Charge relay system role is filled by histidine 43. N-linked (GlcNAc...) asparagine glycosylation occurs at asparagine 79. Catalysis depends on aspartate 88, which acts as the Charge relay system. Asparagine 99 and asparagine 148 each carry an N-linked (GlcNAc...) asparagine glycan. The Charge relay system role is filled by serine 182. The N-linked (GlcNAc...) asparagine glycan is linked to asparagine 229.

It belongs to the peptidase S1 family. Snake venom subfamily. As to quaternary structure, monomer. Expressed by the venom gland.

Its subcellular location is the secreted. It carries out the reaction Selective cleavage of Arg-|-Xaa bond in fibrinogen, to form fibrin, and release fibrinopeptide A. The specificity of further degradation of fibrinogen varies with species origin of the enzyme.. Functionally, thrombin-like snake venom serine protease that acts as an anticoagulant. It cleaves fibrinogen (FGA) to split off the A-fibrinopeptides (A, AY and AP), but not the B-fibrinopeptide. The resulting fibrin polymers are imperfectly formed and much smaller in size (1 to 2 um long) than the fibrin polymers produced by the action of thrombin. These ancrod-induced microthrombi are friable, unstable, urea-soluble and have significantly degraded alpha chains. They do not cross-link to form thrombi. They are markedly susceptible to digestion by plasmin and are rapidly removed from circulation by either reticuloendothelial phagocytosis or normal fibrinolysis, or both. Anticoagulation through the removal of fibrinogen from the blood is rapid, occurring within hours following its administration. It does not activate plasminogen and does not degrade preformed, fully cross-linked thrombin fibrin. It also reduces the level of plasminogen activator inhibitor (PAI) and may stimulate the release of tissue plasminogen activator (PLAT) from the endothelium. The profibrinolytic effect of these 2 actions appears to be limited to local microthrombus degradation. The sequence is that of Thrombin-like enzyme ancrod from Calloselasma rhodostoma (Malayan pit viper).